A 192-amino-acid polypeptide reads, in one-letter code: UPF0316 protein SSP0880 (192 aa).

The next 3 helical transmembrane spans lie at 8-28 (PWLM…CLTM), 40-60 (VAAI…GMVM), and 66-86 (IQNV…GMKI).

It belongs to the UPF0316 family.

The protein localises to the cell membrane. This chain is UPF0316 protein SSP0880, found in Staphylococcus saprophyticus subsp. saprophyticus (strain ATCC 15305 / DSM 20229 / NCIMB 8711 / NCTC 7292 / S-41).